The sequence spans 403 residues: Ribosomal RNA large subunit methyltransferase I (403 aa).

Positions 9–88 (YPRLVLSKGR…ESIDIAFFTR (80 aa)) constitute a PUA domain.

The protein belongs to the methyltransferase superfamily. RlmI family.

It localises to the cytoplasm. It carries out the reaction cytidine(1962) in 23S rRNA + S-adenosyl-L-methionine = 5-methylcytidine(1962) in 23S rRNA + S-adenosyl-L-homocysteine + H(+). Its function is as follows. Specifically methylates the cytosine at position 1962 (m5C1962) of 23S rRNA. This chain is Ribosomal RNA large subunit methyltransferase I, found in Salmonella agona (strain SL483).